Here is a 192-residue protein sequence, read N- to C-terminus: dITP/XTP pyrophosphatase (192 aa).

Substrate is bound at residue 7 to 12 (SNNKNK). Asp-68 (proton acceptor) is an active-site residue. Position 68 (Asp-68) interacts with Mg(2+). Substrate contacts are provided by residues Thr-69, 148–151 (FGYD), Lys-171, and 176–177 (HR).

The protein belongs to the HAM1 NTPase family. As to quaternary structure, homodimer. The cofactor is Mg(2+).

The enzyme catalyses XTP + H2O = XMP + diphosphate + H(+). The catalysed reaction is dITP + H2O = dIMP + diphosphate + H(+). It catalyses the reaction ITP + H2O = IMP + diphosphate + H(+). Its function is as follows. Pyrophosphatase that catalyzes the hydrolysis of nucleoside triphosphates to their monophosphate derivatives, with a high preference for the non-canonical purine nucleotides XTP (xanthosine triphosphate), dITP (deoxyinosine triphosphate) and ITP. Seems to function as a house-cleaning enzyme that removes non-canonical purine nucleotides from the nucleotide pool, thus preventing their incorporation into DNA/RNA and avoiding chromosomal lesions. The protein is dITP/XTP pyrophosphatase of Flavobacterium johnsoniae (strain ATCC 17061 / DSM 2064 / JCM 8514 / BCRC 14874 / CCUG 350202 / NBRC 14942 / NCIMB 11054 / UW101) (Cytophaga johnsonae).